Consider the following 162-residue polypeptide: Phosphopantetheine adenylyltransferase (162 aa).

Substrate is bound at residue Ser9. Residues 9-10 (SF) and His17 each bind ATP. Positions 41, 73, and 87 each coordinate substrate. ATP contacts are provided by residues 88-90 (GLR), Glu98, and 122-128 (YSFLSSS).

The protein belongs to the bacterial CoaD family. In terms of assembly, homohexamer. It depends on Mg(2+) as a cofactor.

It is found in the cytoplasm. It catalyses the reaction (R)-4'-phosphopantetheine + ATP + H(+) = 3'-dephospho-CoA + diphosphate. The protein operates within cofactor biosynthesis; coenzyme A biosynthesis; CoA from (R)-pantothenate: step 4/5. Reversibly transfers an adenylyl group from ATP to 4'-phosphopantetheine, yielding dephospho-CoA (dPCoA) and pyrophosphate. The protein is Phosphopantetheine adenylyltransferase of Salinispora tropica (strain ATCC BAA-916 / DSM 44818 / JCM 13857 / NBRC 105044 / CNB-440).